The chain runs to 79 residues: Adipokinetic hormone (79 aa).

The first 22 residues, 1-22 (MNPKSEVLIAAVLFMLLACVQC), serve as a signal peptide directing secretion. Q23 carries the pyrrolidone carboxylic acid modification. Position 30 is a tryptophan amide (W30). A propeptide spanning residues 34 to 79 (SVGGAGPGTFFETQQGNCKTSNEMLLEIFRFVQSQAQLFLDCKHRE) is cleaved from the precursor.

The protein belongs to the AKH/HRTH/RPCH family.

It is found in the secreted. Probably causes a marked increase in hemolymph carbohydrate. The chain is Adipokinetic hormone (Akh) from Drosophila melanogaster (Fruit fly).